Consider the following 214-residue polypeptide: 3,4-dihydroxy-2-butanone 4-phosphate synthase (214 aa).

Residues 37-38, Asp-42, 150-154, and Glu-174 contribute to the D-ribulose 5-phosphate site; these read RE and RPGHT. Glu-38 provides a ligand contact to Mg(2+). Residue His-153 coordinates Mg(2+).

Belongs to the DHBP synthase family. In terms of assembly, homodimer. Mg(2+) serves as cofactor. The cofactor is Mn(2+).

It catalyses the reaction D-ribulose 5-phosphate = (2S)-2-hydroxy-3-oxobutyl phosphate + formate + H(+). The protein operates within cofactor biosynthesis; riboflavin biosynthesis; 2-hydroxy-3-oxobutyl phosphate from D-ribulose 5-phosphate: step 1/1. In terms of biological role, catalyzes the conversion of D-ribulose 5-phosphate to formate and 3,4-dihydroxy-2-butanone 4-phosphate. This Mannheimia succiniciproducens (strain KCTC 0769BP / MBEL55E) protein is 3,4-dihydroxy-2-butanone 4-phosphate synthase.